The primary structure comprises 227 residues: Flagellar transcriptional regulator FtcR (227 aa).

A Response regulatory domain is found at 1–116 (MIVVVDDRDM…EILARINAIR (116 aa)). A DNA-binding region (ompR/PhoB-type) is located at residues 127-226 (ADGTQLGPIR…KRFLGYCINI (100 aa)).

Functionally, required for transcription of flagellar genes. The sequence is that of Flagellar transcriptional regulator FtcR (ftcR) from Brucella abortus (strain 2308).